The chain runs to 72 residues: Large ribosomal subunit protein bL31 (72 aa).

Zn(2+) contacts are provided by cysteine 16, cysteine 18, cysteine 38, and cysteine 41.

This sequence belongs to the bacterial ribosomal protein bL31 family. Type A subfamily. In terms of assembly, part of the 50S ribosomal subunit. It depends on Zn(2+) as a cofactor.

Its function is as follows. Binds the 23S rRNA. The polypeptide is Large ribosomal subunit protein bL31 (Beutenbergia cavernae (strain ATCC BAA-8 / DSM 12333 / CCUG 43141 / JCM 11478 / NBRC 16432 / NCIMB 13614 / HKI 0122)).